The chain runs to 35 residues: Photosystem I reaction center subunit Z (35 aa).

Residues 10–30 (LVIITTLVVPFMAAAALLFII) form a helical membrane-spanning segment.

The G.violaceus PSI reaction center is composed of one copy each of PsaA,B,C,D,E,F,L,M and Z, and forms trimeric complexes.

It localises to the cell inner membrane. This Gloeobacter violaceus (strain ATCC 29082 / PCC 7421) protein is Photosystem I reaction center subunit Z (psaZ).